The chain runs to 415 residues: Ubp4-interactor sfp47 (415 aa).

Residues Ser-221 and Ser-226 each carry the phosphoserine modification. Thr-231 carries the phosphothreonine modification. Ser-235 is subject to Phosphoserine. The SH3 domain maps to 352 to 415 (PIFAYVRALY…PSNYIEELEY (64 aa)).

Interacts with ubp4.

It localises to the cytoplasm. It is found in the endosome. In terms of biological role, required for the regulation of activity and recruitment of ubp4 to endosomes. The sequence is that of Ubp4-interactor sfp47 (sfp47) from Schizosaccharomyces pombe (strain 972 / ATCC 24843) (Fission yeast).